We begin with the raw amino-acid sequence, 357 residues long: Probable leucine aminopeptidase TRV_02148.1 (357 aa).

The signal sequence occupies residues 1–15; sequence MKVLAALALSALAMA. An N-linked (GlcNAc...) asparagine glycan is attached at asparagine 76. 2 residues coordinate Zn(2+): histidine 167 and aspartate 185. Residues 169–188 are disordered; it reads DSINGKNPQGEAPGADDNGS. Asparagine 186 carries an N-linked (GlcNAc...) asparagine glycan. Glutamate 224 and aspartate 251 together coordinate Zn(2+). N-linked (GlcNAc...) asparagine glycosylation is present at asparagine 269. The cysteines at positions 291 and 295 are disulfide-linked. Histidine 324 is a binding site for Zn(2+).

This sequence belongs to the peptidase M28 family. M28E subfamily. As to quaternary structure, monomer. The cofactor is Zn(2+).

It is found in the secreted. Probable extracellular aminopeptidase which contributes to pathogenicity. The protein is Probable leucine aminopeptidase TRV_02148.1 of Trichophyton verrucosum (strain HKI 0517).